The chain runs to 166 residues: Phospholipase A2 inhibitor clone 08 (166 aa).

A signal peptide spans 1 to 19 (MRLILLSSLLLLGIFLANG). In terms of domain architecture, C-type lectin spans 46 to 161 (LKGAFLTVHR…CDDNLLVVCE (116 aa)). Disulfide bonds link Cys83/Cys160 and Cys138/Cys152. A glycan (N-linked (GlcNAc...) asparagine) is linked at Asn122.

Belongs to the alpha-type phospholipase A2 inhibitor family. As to quaternary structure, homotrimer; non-covalently linked. In terms of tissue distribution, expressed by the liver.

Its subcellular location is the secreted. This phospholipase A2 inhibitor binds directly phospholipase A2 in the presence or absence of calcium. The protein is Phospholipase A2 inhibitor clone 08 of Bothrops moojeni (Lance-headed viper).